Here is a 498-residue protein sequence, read N- to C-terminus: Probable lysophospholipase BODYGUARD 3 (498 aa).

A signal peptide spans 1-55 (MAVMKIKGAATVAGTWLNEAVSFVVFCILDIVDSFLCLLYKAADYLFEAEWKPCY). Cysteine 56 carries N-palmitoyl cysteine lipidation. In terms of domain architecture, AB hydrolase-1 spans 220–326 (VLFIHGFISS…LTLLAPPYYP (107 aa)). The active site involves histidine 224. Residue serine 297 is the Nucleophile of the active site. Catalysis depends on charge relay system residues aspartate 446 and histidine 474.

It localises to the cell membrane. It is found in the secreted. The protein resides in the cell wall. In terms of biological role, involved in cuticle development and morphogenesis. The chain is Probable lysophospholipase BODYGUARD 3 from Arabidopsis thaliana (Mouse-ear cress).